A 49-amino-acid polypeptide reads, in one-letter code: Osteocalcin (49 aa).

Residues Y1 to G47 enclose the Gla domain. P9 carries the hydroxyproline modification. E17, E21, E24, and D30 together coordinate Ca(2+). E17, E21, and E24 each carry 4-carboxyglutamate. A disulfide bridge links C23 with C29.

The protein belongs to the osteocalcin/matrix Gla protein family. In terms of processing, gamma-carboxyglutamate residues are formed by vitamin K dependent carboxylation by GGCX. These residues are essential for the binding of calcium. Decarboxylation promotes the hormone activity.

It is found in the secreted. In terms of biological role, the carboxylated form is one of the main organic components of the bone matrix, which constitutes 1-2% of the total bone protein. It acts as a negative regulator of bone formation and is required to limit bone formation without impairing bone resorption or mineralization. The carboxylated form binds strongly to apatite and calcium. Functionally, the uncarboxylated form acts as a hormone secreted by osteoblasts, which regulates different cellular processes, such as energy metabolism, male fertility and brain development. Regulates of energy metabolism by acting as a hormone favoring pancreatic beta-cell proliferation, insulin secretion and sensitivity and energy expenditure. Uncarboxylated osteocalcin hormone also promotes testosterone production in the testes: acts as a ligand for G protein-coupled receptor GPRC6A at the surface of Leydig cells, initiating a signaling response that promotes the expression of enzymes required for testosterone synthesis in a CREB-dependent manner. Also acts as a regulator of brain development: osteocalcin hormone crosses the blood-brain barrier and acts as a ligand for GPR158 on neurons, initiating a signaling response that prevents neuronal apoptosis in the hippocampus, favors the synthesis of all monoamine neurotransmitters and inhibits that of gamma-aminobutyric acid (GABA). Osteocalcin also crosses the placenta during pregnancy and maternal osteocalcin is required for fetal brain development. This Equus caballus (Horse) protein is Osteocalcin (BGLAP).